The sequence spans 572 residues: MFRPRFEPMNLPKDSNKPSTLMVLADRLNFISCAEGSSKYASKLFEGTLIDAEIMTNRARIEDLERRNRAAKAALEQLENMSATVPVHVSSALQTIEYPLETVIDVLDDLAQRAVQEKDIVGSYKTLDIRAPGEDVPANVIWIVKNGEPLTFNTDFQVDFLTTSFAIAGNGRLGFGSWFRALQTQLLDNNKAIARVLNVMGDTRISGRFMKTAIRALRSAMEIYAGTRQYSGFEATVLCLLHYSRSRQSASNIRHGLDVSIFEDALRHVPTYLNYMLEDIRAEWGSVTFSFDRSKLPVNFFSPIDGRKYSNGVFDPHIVYQLLKRTGTLSTTVRDITKETLLPIDPDFVRFDDPIAALSISFFPSRRTPLILHEDDPLVRTVIDSISLLLVLQKLMFNSNVYTSTHLNRFQPSAFFELPLGTQSEQEAAKWPVAPGSRPQATASTFDDNGQDMASRDNNLFFLFEKYVVPMYRYDNRCEVTGFFPGLAALCITGRVKGIPTAVRLGEYYSSLCNLIELDLRKTSHVGSGAAAVLAVHDSLTGDVEEGVSRLLEVFDAKKAFERNIEDIQRGV.

An interaction with major capsid protein/MCP region spans residues 1–58 (MFRPRFEPMNLPKDSNKPSTLMVLADRLNFISCAEGSSKYASKLFEGTLIDAEIMTNR).

The protein belongs to the herpesviridae CVC2 protein family. Heterodimerizes with CVC1. Interacts with major capsid protein/MCP and triplex capsid protein 1/TRX1 at the pentamer vertices. Interacts with the large tegument protein/LTP.

Its subcellular location is the virion. The protein localises to the host nucleus. Functionally, capsid vertex-specific component that plays a role during viral DNA encapsidation, assuring correct genome cleavage and presumably stabilizing capsids that contain full-length viral genomes. Participates in the interaction between the capsid and the tegument through interaction with the large tegument protein/LTP. This is Capsid vertex component 2 from Infectious laryngotracheitis virus (strain Thorne V882) (ILTV).